The primary structure comprises 933 residues: Potassium voltage-gated channel subfamily KQT member 5 (933 aa).

Over 1–126 (MPRHHAGGEE…YNVLERPRGW (126 aa)) the chain is Cytoplasmic. Residue Ser-89 is modified to Phosphoserine. The chain crosses the membrane as a helical span at residues 127-147 (AFVYHAFVFLLVFGCLILSVF). At 148–157 (STIPEHTKLA) the chain is on the extracellular side. Residues 158 to 178 (SSCLLILEFVMIVVFGLEFII) traverse the membrane as a helical segment. Topologically, residues 179–201 (RIWSAGCCCRYRGWQGRLRFARK) are cytoplasmic. Residues 202–222 (PFCVIDTIVLIASIAVVSAKT) traverse the membrane as a helical segment. The Extracellular portion of the chain corresponds to 223–230 (QGNIFATS). The helical; Voltage-sensor transmembrane segment at 231-253 (ALRSLRFLQILRMVRMDRRGGTW) threads the bilayer. A 1,2-diacyl-sn-glycero-3-phospho-(1D-myo-inositol-4,5-bisphosphate) contacts are provided by Arg-249 and Lys-265. The Cytoplasmic portion of the chain corresponds to 254–267 (KLLGSVVYAHSKEL). A helical transmembrane segment spans residues 268 to 288 (ITAWYIGFLVLIFSSFLVYLV). Over 289–299 (EKDANKEFSTY) the chain is Extracellular. The pore-forming intramembrane region spans 300–320 (ADALWWGTITLTTIGYGDKTP). Over 321–326 (LTWLGR) the chain is Extracellular. Residues 327 to 347 (LLSAGFALLGISFFALPAGIL) traverse the membrane as a helical segment. Residues 348–933 (GSGFALKVQE…ALSLPHVKLN (586 aa)) are Cytoplasmic-facing. Lys-362 contacts a 1,2-diacyl-sn-glycero-3-phospho-(1D-myo-inositol-4,5-bisphosphate). Positions 371–379 (AANLIQCVW) are interaction with CALM. The segment at 405–465 (SPTKKEQGEA…EGSPTKVQKS (61 aa)) is disordered. Positions 432–441 (RGQSIKSRQA) are enriched in polar residues. Ser-448 is subject to Phosphoserine. Residues 522 to 529 (VIRAIRIM) are interaction with CALM. The segment at 578–598 (KGQMTSDKKSREKITAEHETT) is disordered. A compositionally biased stretch (basic and acidic residues) spans 583-598 (SDKKSREKITAEHETT). Ser-832 carries the post-translational modification Phosphoserine. Residues 878–933 (GAEETETDTFDGTPPPAGEAAFSSDSLRTGRSRSSQNICKTGDSTDALSLPHVKLN) are disordered. Residues 900-924 (SSDSLRTGRSRSSQNICKTGDSTDA) show a composition bias toward polar residues.

This sequence belongs to the potassium channel family. KQT (TC 1.A.1.15) subfamily. Kv7.5/KCNQ5 sub-subfamily. Homotetramer; forms a functional homotetrameric channel resulting in the expression of a small M-current. Heterotetramer with KCNQ3; forms heterotetrameric M-channel responsible for the native M-current. Heterotetramer with KCNQ1; forms a functional voltage-gated potassium channel. Interacts (via C-terminus) with calmodulin/CALM; forms a heterooctameric structure (with 4:4 KCNQ1:CALM stoichiometry); the interaction is calcium-independent, constitutive and participates in the channel function. In terms of tissue distribution, strongly expressed in brain. Also expressed in colon, lung and uterus.

The protein resides in the cell membrane. The catalysed reaction is K(+)(in) = K(+)(out). Phosphatidylinositol-4,5-bisphosphate (PIP2) is essential to activate KCNQ5 channel by inducing the coupling of the voltage-sensing domain (VSD) and the pore-forming domain (PD). Calcium suppresses KCNQ5 channel current through calcium-bound CALM C-terminus. Therefore CALM acts as calcium sensor that controls channel activity. Zinc potentiates channel activity in a pH-dependent manner. The activity is modulated by small changes in cell volume. Activated by the anticonvulsant retigabine. Inhibited by linopirdine and XE991. Functionally, pore-forming subunit of the voltage-gated potassium (Kv) channel broadly expressed in brain and skeletal muscle and involved in the regulation of neuronal excitability. Associates with KCNQ3/Kv7.3 pore-forming subunit to form a potassium channel which contributes to M-type current, a slowly activating and deactivating potassium conductance which plays a critical role in determining the subthreshold electrical excitability of neurons. Contributes, with other potassium channels, to the molecular diversity of a heterogeneous population of M-channels, varying in kinetic and pharmacological properties, which underlie this physiologically important current. Also forms a functional channel with KCNQ1/Kv7.1 subunit that may contribute to vasoconstriction and hypertension. Channel may be selectively permeable in vitro to other cations besides potassium, in decreasing order of affinity K(+) = Rb(+) &gt; Cs(+) &gt; Na(+). This is Potassium voltage-gated channel subfamily KQT member 5 from Mus musculus (Mouse).